The chain runs to 335 residues: Pyridoxal 5'-phosphate synthase subunit PdxS (335 aa).

D30 contacts D-ribose 5-phosphate. K87 serves as the catalytic Schiff-base intermediate with D-ribose 5-phosphate. G159 is a binding site for D-ribose 5-phosphate. Residue R171 participates in D-glyceraldehyde 3-phosphate binding. D-ribose 5-phosphate-binding positions include G257 and 278–279 (GS).

It belongs to the PdxS/SNZ family. In the presence of PdxT, forms a dodecamer of heterodimers.

It carries out the reaction aldehydo-D-ribose 5-phosphate + D-glyceraldehyde 3-phosphate + L-glutamine = pyridoxal 5'-phosphate + L-glutamate + phosphate + 3 H2O + H(+). It functions in the pathway cofactor biosynthesis; pyridoxal 5'-phosphate biosynthesis. Catalyzes the formation of pyridoxal 5'-phosphate from ribose 5-phosphate (RBP), glyceraldehyde 3-phosphate (G3P) and ammonia. The ammonia is provided by the PdxT subunit. Can also use ribulose 5-phosphate and dihydroxyacetone phosphate as substrates, resulting from enzyme-catalyzed isomerization of RBP and G3P, respectively. This Thermococcus onnurineus (strain NA1) protein is Pyridoxal 5'-phosphate synthase subunit PdxS.